The sequence spans 109 residues: Nucleoid-associated protein Ping_2276 (109 aa).

This sequence belongs to the YbaB/EbfC family. Homodimer.

The protein resides in the cytoplasm. It is found in the nucleoid. Binds to DNA and alters its conformation. May be involved in regulation of gene expression, nucleoid organization and DNA protection. In Psychromonas ingrahamii (strain DSM 17664 / CCUG 51855 / 37), this protein is Nucleoid-associated protein Ping_2276.